Reading from the N-terminus, the 178-residue chain is Large ribosomal subunit protein uL6 (178 aa).

It belongs to the universal ribosomal protein uL6 family. As to quaternary structure, part of the 50S ribosomal subunit.

Its function is as follows. This protein binds to the 23S rRNA, and is important in its secondary structure. It is located near the subunit interface in the base of the L7/L12 stalk, and near the tRNA binding site of the peptidyltransferase center. In Lactococcus lactis subsp. lactis (strain IL1403) (Streptococcus lactis), this protein is Large ribosomal subunit protein uL6.